Consider the following 551-residue polypeptide: CTP synthase (551 aa).

Positions M1–W267 are amidoligase domain. Residue S13 participates in CTP binding. Residue S13 participates in UTP binding. S14–I19 contributes to the ATP binding site. L-glutamine is bound at residue Y54. D71 is an ATP binding site. Mg(2+) is bound by residues D71 and E141. CTP is bound by residues D148 to E150, K188 to Q193, and K224. UTP is bound by residues K188–Q193 and K224. In terms of domain architecture, Glutamine amidotransferase type-1 spans R292 to E532. G353 contributes to the L-glutamine binding site. C380 functions as the Nucleophile; for glutamine hydrolysis in the catalytic mechanism. Residues Y381–H384, E404, and R460 each bind L-glutamine. Residues H505 and E507 contribute to the active site.

The protein belongs to the CTP synthase family. Homotetramer.

The catalysed reaction is UTP + L-glutamine + ATP + H2O = CTP + L-glutamate + ADP + phosphate + 2 H(+). It catalyses the reaction L-glutamine + H2O = L-glutamate + NH4(+). The enzyme catalyses UTP + NH4(+) + ATP = CTP + ADP + phosphate + 2 H(+). The protein operates within pyrimidine metabolism; CTP biosynthesis via de novo pathway; CTP from UDP: step 2/2. Allosterically activated by GTP, when glutamine is the substrate; GTP has no effect on the reaction when ammonia is the substrate. The allosteric effector GTP functions by stabilizing the protein conformation that binds the tetrahedral intermediate(s) formed during glutamine hydrolysis. Inhibited by the product CTP, via allosteric rather than competitive inhibition. Its function is as follows. Catalyzes the ATP-dependent amination of UTP to CTP with either L-glutamine or ammonia as the source of nitrogen. Regulates intracellular CTP levels through interactions with the four ribonucleotide triphosphates. The protein is CTP synthase of Thermomicrobium roseum (strain ATCC 27502 / DSM 5159 / P-2).